The chain runs to 331 residues: MSVFESETSNFHVYNNHEIQTQPQMQTFLSEEEPVGRQNSILSLTLDEIQMKSGKSFGAMNMDEFLANLWTTVEENDNEGGGAHNDGEKPAVLPRQGSLSLPVPLCKKTVDEVWLEIQNGVQQHPPSSNSGQNSAENIRRQQTLGEITLEDFLVKAGVVQEPLKTTMRMSSSDFGYNPEFGVGLHCQNQNNYGDNRSVYSENRPFYSVLGESSSCMTGNGRSNQYLTGLDAFRIKKRIIDGPPEILMERRQRRMIKNRESAARSRARRQAYTVELELELNNLTEENTKLKEIVEENEKKRRQEIISRSKQVTKEKSGDKLRKIRRMASAGW.

Residues serine 40 and serine 98 each carry the phosphoserine modification. Threonine 143 carries the post-translational modification Phosphothreonine. Residues 247–310 (MERRQRRMIK…RQEIISRSKQ (64 aa)) form the bZIP domain. The interval 249 to 268 (RRQRRMIKNRESAARSRARR) is basic motif. Residues 275 to 289 (LELELNNLTEENTKL) form a leucine-zipper region. Positions 296–320 (NEKKRRQEIISRSKQVTKEKSGDKL) are enriched in basic and acidic residues. The disordered stretch occupies residues 296–331 (NEKKRRQEIISRSKQVTKEKSGDKLRKIRRMASAGW).

The protein belongs to the bZIP family. ABI5 subfamily. In terms of assembly, DNA-binding heterodimer with AREB3/DPBF3 or EEL/DPBF4. Interacts with the AFP proteins AFP1, AFP2 and AFP3. In terms of tissue distribution, predominantly expressed in seeds.

The protein localises to the nucleus. Could participate in abscisic acid-regulated gene expression during seed development. The protein is ABSCISIC ACID-INSENSITIVE 5-like protein 1 (DPBF2) of Arabidopsis thaliana (Mouse-ear cress).